Reading from the N-terminus, the 141-residue chain is Hemoglobin subunit alpha (141 aa).

The Globin domain occupies 1 to 141; it reads VLSANDKSNV…VSTVLTSKYR (141 aa). Serine 3 bears the Phosphoserine mark. N6-succinyllysine is present on residues lysine 7 and lysine 11. Lysine 16 carries the post-translational modification N6-acetyllysine; alternate. Lysine 16 carries the post-translational modification N6-succinyllysine; alternate. Position 24 is a phosphotyrosine (tyrosine 24). The residue at position 35 (serine 35) is a Phosphoserine. Lysine 40 bears the N6-succinyllysine mark. The residue at position 49 (serine 49) is a Phosphoserine. An O2-binding site is contributed by histidine 58. Heme b is bound at residue histidine 87. At serine 102 the chain carries Phosphoserine. Phosphothreonine is present on threonine 108. Serine 124 carries the post-translational modification Phosphoserine. Residues threonine 134 and threonine 137 each carry the phosphothreonine modification. A Phosphoserine modification is found at serine 138.

This sequence belongs to the globin family. As to quaternary structure, heterotetramer of two alpha chains and two beta chains. In terms of tissue distribution, red blood cells.

In terms of biological role, involved in oxygen transport from the lung to the various peripheral tissues. Functionally, hemopressin acts as an antagonist peptide of the cannabinoid receptor CNR1. Hemopressin-binding efficiently blocks cannabinoid receptor CNR1 and subsequent signaling. This Hippopotamus amphibius (Hippopotamus) protein is Hemoglobin subunit alpha (HBA).